Reading from the N-terminus, the 190-residue chain is Xanthine phosphoribosyltransferase (190 aa).

Leu20 and Asn27 together coordinate xanthine. 128 to 132 (ANGKA) contributes to the 5-phospho-alpha-D-ribose 1-diphosphate binding site. Lys156 contacts xanthine.

Belongs to the purine/pyrimidine phosphoribosyltransferase family. Xpt subfamily. In terms of assembly, homodimer.

The protein resides in the cytoplasm. The enzyme catalyses XMP + diphosphate = xanthine + 5-phospho-alpha-D-ribose 1-diphosphate. It participates in purine metabolism; XMP biosynthesis via salvage pathway; XMP from xanthine: step 1/1. In terms of biological role, converts the preformed base xanthine, a product of nucleic acid breakdown, to xanthosine 5'-monophosphate (XMP), so it can be reused for RNA or DNA synthesis. The chain is Xanthine phosphoribosyltransferase from Pseudomonas putida (strain ATCC 700007 / DSM 6899 / JCM 31910 / BCRC 17059 / LMG 24140 / F1).